The primary structure comprises 264 residues: MQTVNTQPHRIFRVLLPAVFSSLLLSSLTVSAASSSNDADKLYFGNNKYYLFNNVWGKDEIKGWQQTIFYNSPISMGWNWHWPSSTHSVKAYPSLVSGWHWTAGYTENSGLPIQLSSNKSITSNVTYSIKATGTYNAAYDIWFHTTDKANWDSSPTDELMIWLNDTNAGPAGDYIETVFLGDSSWNVFKGWINADNGGGWNVFSFVHTSGTNSASLNIRHFTDYLVQTKQWMSDEKYISSVEFGTEIFGGDGQIDITEWRVDVK.

The N-terminal stretch at 1-32 (MQTVNTQPHRIFRVLLPAVFSSLLLSSLTVSA) is a signal peptide.

Belongs to the glycosyl hydrolase 12 (cellulase H) family.

The enzyme catalyses Endohydrolysis of (1-&gt;4)-beta-D-glucosidic linkages in cellulose, lichenin and cereal beta-D-glucans.. This is Endoglucanase S (celS) from Pectobacterium parmentieri.